Reading from the N-terminus, the 520-residue chain is Bifunctional purine biosynthesis protein PurH (520 aa).

Residues 1–150 (MSDDRKAIKR…KNHPSVAVVV (150 aa)) enclose the MGS-like domain.

The protein belongs to the PurH family.

It catalyses the reaction (6R)-10-formyltetrahydrofolate + 5-amino-1-(5-phospho-beta-D-ribosyl)imidazole-4-carboxamide = 5-formamido-1-(5-phospho-D-ribosyl)imidazole-4-carboxamide + (6S)-5,6,7,8-tetrahydrofolate. It carries out the reaction IMP + H2O = 5-formamido-1-(5-phospho-D-ribosyl)imidazole-4-carboxamide. The protein operates within purine metabolism; IMP biosynthesis via de novo pathway; 5-formamido-1-(5-phospho-D-ribosyl)imidazole-4-carboxamide from 5-amino-1-(5-phospho-D-ribosyl)imidazole-4-carboxamide (10-formyl THF route): step 1/1. It participates in purine metabolism; IMP biosynthesis via de novo pathway; IMP from 5-formamido-1-(5-phospho-D-ribosyl)imidazole-4-carboxamide: step 1/1. The sequence is that of Bifunctional purine biosynthesis protein PurH from Corynebacterium glutamicum (strain ATCC 13032 / DSM 20300 / JCM 1318 / BCRC 11384 / CCUG 27702 / LMG 3730 / NBRC 12168 / NCIMB 10025 / NRRL B-2784 / 534).